A 1520-amino-acid polypeptide reads, in one-letter code: Accessory colonization factor AcfD (1520 aa).

Positions 1-16 (MKIRIVSLIVLGFLIG) are cleaved as a signal peptide. A lipid anchor (N-palmitoyl cysteine) is attached at Cys-17. Cys-17 carries the S-diacylglycerol cysteine lipid modification. Positions 1085–1388 (GNRQPTGQWA…MFAQLKEWAE (304 aa)) constitute a Peptidase M60 domain.

The protein resides in the cell membrane. This is Accessory colonization factor AcfD (acfD) from Vibrio cholerae serotype O1 (strain ATCC 39315 / El Tor Inaba N16961).